The primary structure comprises 637 residues: Chaperone protein dnaK2 (637 aa).

Threonine 197 is subject to Phosphothreonine; by autocatalysis. A disordered region spans residues 602–637 (AAAGGAAPGGDAGASAASGGGDASDDVIDAEFTETK). Positions 603–623 (AAGGAAPGGDAGASAASGGGD) are enriched in gly residues. Positions 624–637 (ASDDVIDAEFTETK) are enriched in acidic residues.

It belongs to the heat shock protein 70 family.

Acts as a chaperone. This is Chaperone protein dnaK2 (dnaK2) from Parasynechococcus marenigrum (strain WH8102).